The following is a 405-amino-acid chain: Tryptophan synthase beta chain (405 aa).

K98 bears the N6-(pyridoxal phosphate)lysine mark.

The protein belongs to the TrpB family. Tetramer of two alpha and two beta chains. Pyridoxal 5'-phosphate is required as a cofactor.

It carries out the reaction (1S,2R)-1-C-(indol-3-yl)glycerol 3-phosphate + L-serine = D-glyceraldehyde 3-phosphate + L-tryptophan + H2O. The protein operates within amino-acid biosynthesis; L-tryptophan biosynthesis; L-tryptophan from chorismate: step 5/5. The beta subunit is responsible for the synthesis of L-tryptophan from indole and L-serine. The polypeptide is Tryptophan synthase beta chain (Xylella fastidiosa (strain M23)).